The following is a 201-amino-acid chain: NADH-quinone oxidoreductase subunit C (201 aa).

The protein belongs to the complex I 30 kDa subunit family. As to quaternary structure, NDH-1 is composed of 14 different subunits. Subunits NuoB, C, D, E, F, and G constitute the peripheral sector of the complex.

The protein resides in the cell inner membrane. The enzyme catalyses a quinone + NADH + 5 H(+)(in) = a quinol + NAD(+) + 4 H(+)(out). Functionally, NDH-1 shuttles electrons from NADH, via FMN and iron-sulfur (Fe-S) centers, to quinones in the respiratory chain. The immediate electron acceptor for the enzyme in this species is believed to be ubiquinone. Couples the redox reaction to proton translocation (for every two electrons transferred, four hydrogen ions are translocated across the cytoplasmic membrane), and thus conserves the redox energy in a proton gradient. The protein is NADH-quinone oxidoreductase subunit C of Dechloromonas aromatica (strain RCB).